We begin with the raw amino-acid sequence, 731 residues long: Beta-galactosidase (731 aa).

A signal peptide spans 1-23; sequence MGVGIQTMWSILLLFSCIFSAAS. E182 (proton donor) is an active-site residue. The Nucleophile role is filled by E251. N-linked (GlcNAc...) asparagine glycosylation occurs at N459.

Belongs to the glycosyl hydrolase 35 family.

Its subcellular location is the secreted. It localises to the extracellular space. The protein localises to the apoplast. The enzyme catalyses Hydrolysis of terminal non-reducing beta-D-galactose residues in beta-D-galactosides.. Functionally, involved in cell wall degradation. Degrades polysaccharides containing beta-(1--&gt;4)-linked galactans, acting as an exo-(1--&gt;4)-beta-D-galactanase. This chain is Beta-galactosidase, found in Malus domestica (Apple).